A 620-amino-acid polypeptide reads, in one-letter code: Ran-binding protein 10 (620 aa).

A disordered region spans residues 1–41; the sequence is MAAATADPGAGNPQPGDSSGGGAGGGLPSPGEQELSRRLQR. Alanine 2 carries the N-acetylalanine modification. Positions 18–28 are enriched in gly residues; the sequence is SSGGGAGGGLP. Residues 35 to 222 form the B30.2/SPRY domain; it reads LSRRLQRLYP…VDANFGQQPF (188 aa). The LisH domain occupies 253 to 285; sequence WQAVLQNMVSSYLVHHGYCATATAFARMTETPI. A CTLH domain is found at 291 to 348; the sequence is SIKNRQKIQKLVLEGRVGEAIETTQRFYPGLLEHNPNLLFMLKCRQFVEMVNGTDSEV. Polar residues predominate over residues 347 to 398; it reads EVRSLSSRSPKSQDSYPGSPSLSPRHGPSSSHMHNTGADSPSCSNGVASTKS. The disordered stretch occupies residues 347–458; it reads EVRSLSSRSP…ETSDSEMEME (112 aa). A Phosphoserine modification is found at serine 361. Phosphotyrosine is present on tyrosine 362. Residues serine 365, serine 367, serine 369, serine 422, serine 451, and serine 453 each carry the phosphoserine modification. Low complexity predominate over residues 409 to 436; it reads SSSSSSSSSSSSSSPSSVNYSESNSTDS.

The protein belongs to the RANBP9/10 family. In terms of assembly, may form homodimers. Identified in the CTLH complex that contains GID4, RANBP9 and/or RANBP10, MKLN1, MAEA, RMND5A (or alternatively its paralog RMND5B), GID8, ARMC8, WDR26 and YPEL5. Within this complex, MAEA, RMND5A (or alternatively its paralog RMND5B), GID8, WDR26, and RANBP9 and/or RANBP10 form the catalytic core, while GID4, MKLN1, ARMC8 and YPEL5 have ancillary roles. Interacts with RAN and RANBP9. Interacts with the HGF receptor MET. Interacts with AR. Interacts with TUBB1. Interacts with YPEL5. May interact with TUBB5. Interacts with DDX4. Broadly expressed, with highest levels in skeletal muscle.

The protein localises to the cytoplasm. The protein resides in the cytosol. It localises to the nucleus. In terms of biological role, may act as an adapter protein to couple membrane receptors to intracellular signaling pathways. Core component of the CTLH E3 ubiquitin-protein ligase complex that selectively accepts ubiquitin from UBE2H and mediates ubiquitination and subsequent proteasomal degradation of the transcription factor HBP1. Enhances dihydrotestosterone-induced transactivation activity of AR, as well as dexamethasone-induced transactivation activity of NR3C1, but does not affect estrogen-induced transactivation. Acts as a guanine nucleotide exchange factor (GEF) for RAN GTPase. May play an essential role in hemostasis and in maintaining microtubule dynamics with respect to both platelet shape and function. The chain is Ran-binding protein 10 (RANBP10) from Homo sapiens (Human).